Reading from the N-terminus, the 295-residue chain is Ribosomal protein L11 methyltransferase (295 aa).

Residues Thr146, Gly167, Asp189, and Asn231 each contribute to the S-adenosyl-L-methionine site.

This sequence belongs to the methyltransferase superfamily. PrmA family.

The protein localises to the cytoplasm. The enzyme catalyses L-lysyl-[protein] + 3 S-adenosyl-L-methionine = N(6),N(6),N(6)-trimethyl-L-lysyl-[protein] + 3 S-adenosyl-L-homocysteine + 3 H(+). Methylates ribosomal protein L11. The protein is Ribosomal protein L11 methyltransferase of Vibrio vulnificus (strain YJ016).